An 830-amino-acid chain; its full sequence is Scavenger receptor class F member 1 (830 aa).

The N-terminal stretch at 1–19 (MGLGLLLPLLLLWTRGTQG) is a signal peptide. Residues 20–421 (SELDPKGQHV…CQPGSGSRDT (402 aa)) lie on the Extracellular side of the membrane. EGF-like domains are found at residues 53-87 (TIPI…AHCS), 95-130 (WGPD…ARCE), 155-191 (WSST…RRCS), and 215-249 (WGPE…ARCE). Cystine bridges form between C57/C69, C63/C75, C77/C86, C99/C111, C105/C118, C120/C129, C159/C172, C165/C179, C181/C190, C219/C230, C225/C237, and C239/C248. N-linked (GlcNAc...) asparagine glycosylation occurs at N289. 2 consecutive EGF-like domains span residues 302–339 (FGES…PRCE) and 351–382 (CGST…PSCN). Disulfide bonds link C306-C319, C313-C326, C329-C338, C355-C363, C358-C370, and C372-C381. 2 N-linked (GlcNAc...) asparagine glycosylation sites follow: N382 and N393. A helical membrane pass occupies residues 422–442 (ALIAGSLVPLLLLFLGLACCA). The Cytoplasmic segment spans residues 443-830 (CCCWAPRSDL…VVPISRPPEP (388 aa)). Disordered stretches follow at residues 516–539 (GWAT…PAYC), 581–688 (SLAR…SGPV), and 715–830 (FQKG…PPEP). S589 and S606 each carry phosphoserine. The span at 634-643 (ESTGPEEAEA) shows a compositional bias: acidic residues. Positions 644 to 653 (PESFPAAASP) are enriched in low complexity.

Heterophilic interaction with SREC2 via its extracellular domain. The heterophilic interaction is suppressed by the presence of ligand such as Ac-LDL. Interacts with AVIL. In terms of tissue distribution, endothelial cells.

The protein resides in the membrane. In terms of biological role, mediates the binding and degradation of acetylated low density lipoprotein (Ac-LDL). Mediates heterophilic interactions, suggesting a function as adhesion protein. Plays a role in the regulation of neurite-like outgrowth. This Homo sapiens (Human) protein is Scavenger receptor class F member 1 (SCARF1).